The primary structure comprises 978 residues: Sensor histidine kinase TodS (978 aa).

Residues 32-103 (CEEHARIIFD…TQKRLVETAS (72 aa)) enclose the PAS 1 domain. One can recognise a PAC 1 domain in the interval 108–162 (VRCDVEILGKSGGREVIAVDFSLLPICNEEGSIVYLLAEGRNITDKKKAEAMLAL). A Histidine kinase 1 domain is found at 187-405 (KVSHELRTPL…LFQVKLPLNA (219 aa)). Position 190 is a phosphohistidine; by autocatalysis (histidine 190). One can recognise a Response regulatory domain in the interval 452–567 (RVLIVEDNPD…ELRARVSNLV (116 aa)). Position 500 is a 4-aspartylphosphate (aspartate 500). In terms of domain architecture, PAS 2 spans 611 to 681 (SEARWKAVYE…QRLANLLQGG (71 aa)). In terms of domain architecture, PAC 2 spans 685–737 (YSVERSYLCKNGSTIWANASVSLMPQRVGESPVILQIIDDITEKKQAQENLNQ). A Histidine kinase 2 domain is found at 757–974 (YIAHEINQPL…CFLVSIPARQ (218 aa)). The residue at position 760 (histidine 760) is a Phosphohistidine.

Post-translationally, autophosphorylated. Activation requires a sequential transfer of a phosphate group from a His in the primary transmitter domain, to an Asp in the receiver domain and to a His in the secondary transmitter domain.

It localises to the cytoplasm. It carries out the reaction ATP + protein L-histidine = ADP + protein N-phospho-L-histidine.. Its activity is regulated as follows. Activity is regulated by agonists and antagonists. Binding of agonists such as toluene or benzene to TodS stimulates autophosphorylation at His-190. Activity is inhibited by antagonists such as o-xylene, o-chlorotoluene and trimethylbenzene isomers, which bind to TodS but do not stimulate autophosphorylation. Agonists and antagonists bind to the same PAS domain. Functionally, member of the two-component regulatory system TodS/TodT involved in the regulation of toluene degradation. Phosphorylates TodT via a four-step phosphorelay in response to toluene. Can also be induced by benzene and ethylbenzene. The sequence is that of Sensor histidine kinase TodS (todS) from Pseudomonas putida (strain DOT-T1E).